The following is a 297-amino-acid chain: 4-hydroxy-tetrahydrodipicolinate synthase (297 aa).

A pyruvate-binding site is contributed by Thr47. Catalysis depends on Tyr135, which acts as the Proton donor/acceptor. Catalysis depends on Lys163, which acts as the Schiff-base intermediate with substrate. Ile205 is a binding site for pyruvate.

The protein belongs to the DapA family. Homotetramer; dimer of dimers.

The protein resides in the cytoplasm. It catalyses the reaction L-aspartate 4-semialdehyde + pyruvate = (2S,4S)-4-hydroxy-2,3,4,5-tetrahydrodipicolinate + H2O + H(+). It participates in amino-acid biosynthesis; L-lysine biosynthesis via DAP pathway; (S)-tetrahydrodipicolinate from L-aspartate: step 3/4. Its function is as follows. Catalyzes the condensation of (S)-aspartate-beta-semialdehyde [(S)-ASA] and pyruvate to 4-hydroxy-tetrahydrodipicolinate (HTPA). The polypeptide is 4-hydroxy-tetrahydrodipicolinate synthase (Dehalococcoides mccartyi (strain CBDB1)).